A 264-amino-acid polypeptide reads, in one-letter code: Thymidylate synthase (264 aa).

Arg21 provides a ligand contact to dUMP. Residue His51 coordinates (6R)-5,10-methylene-5,6,7,8-tetrahydrofolate. DUMP is bound at residue Arg126–Arg127. Cys146 serves as the catalytic Nucleophile. Residues Arg166 to Asp169, Asn177, and His207 to Tyr209 contribute to the dUMP site. Asp169 contacts (6R)-5,10-methylene-5,6,7,8-tetrahydrofolate. Ala263 contributes to the (6R)-5,10-methylene-5,6,7,8-tetrahydrofolate binding site.

The protein belongs to the thymidylate synthase family. Bacterial-type ThyA subfamily. In terms of assembly, homodimer.

The protein resides in the cytoplasm. It catalyses the reaction dUMP + (6R)-5,10-methylene-5,6,7,8-tetrahydrofolate = 7,8-dihydrofolate + dTMP. It participates in pyrimidine metabolism; dTTP biosynthesis. Catalyzes the reductive methylation of 2'-deoxyuridine-5'-monophosphate (dUMP) to 2'-deoxythymidine-5'-monophosphate (dTMP) while utilizing 5,10-methylenetetrahydrofolate (mTHF) as the methyl donor and reductant in the reaction, yielding dihydrofolate (DHF) as a by-product. This enzymatic reaction provides an intracellular de novo source of dTMP, an essential precursor for DNA biosynthesis. This is Thymidylate synthase from Allorhizobium ampelinum (strain ATCC BAA-846 / DSM 112012 / S4) (Agrobacterium vitis (strain S4)).